A 214-amino-acid chain; its full sequence is FMN-dependent NADH:quinone oxidoreductase 1 (214 aa).

Residues 17 to 19 (SWS) and 144 to 147 (SAGG) each bind FMN.

This sequence belongs to the azoreductase type 1 family. As to quaternary structure, homodimer. It depends on FMN as a cofactor.

The catalysed reaction is 2 a quinone + NADH + H(+) = 2 a 1,4-benzosemiquinone + NAD(+). It catalyses the reaction N,N-dimethyl-1,4-phenylenediamine + anthranilate + 2 NAD(+) = 2-(4-dimethylaminophenyl)diazenylbenzoate + 2 NADH + 2 H(+). Its function is as follows. Quinone reductase that provides resistance to thiol-specific stress caused by electrophilic quinones. In terms of biological role, also exhibits azoreductase activity. Catalyzes the reductive cleavage of the azo bond in aromatic azo compounds to the corresponding amines. The polypeptide is FMN-dependent NADH:quinone oxidoreductase 1 (Lactococcus lactis subsp. lactis (strain IL1403) (Streptococcus lactis)).